A 68-amino-acid chain; its full sequence is Large ribosomal subunit protein uL30 (68 aa).

Residues 1–26 (MSAKKSASKATVTVQQIGSPLRREPS) form a disordered region. Polar residues predominate over residues 8–18 (SKATVTVQQIG).

It belongs to the universal ribosomal protein uL30 family. Part of the 50S ribosomal subunit.

The protein is Large ribosomal subunit protein uL30 of Parvibaculum lavamentivorans (strain DS-1 / DSM 13023 / NCIMB 13966).